Reading from the N-terminus, the 279-residue chain is Sperm acrosome membrane-associated protein 1 (279 aa).

An N-terminal signal peptide occupies residues 1–29 (MKSRGAGCSARLLLTVGWLLLAGLQSTCG). Residues 30 to 221 (INVTAIQDPS…VIICIFVIFV (192 aa)) lie on the Extracellular side of the membrane. Asn31 carries an N-linked (GlcNAc...) asparagine glycan. Positions 39 to 74 (SLAREGEGEPEGDEEPENDSETEKEPQAEAEDDSEG) are disordered. Acidic residues predominate over residues 46–58 (GEPEGDEEPENDS). A helical transmembrane segment spans residues 222–242 (LIFIIINWTAVKDFWAKASTT). Residues 243-279 (EIQSELSSMRYKDSTSLDQSPTDIPGHEDDALSEWNE) lie on the Cytoplasmic side of the membrane. Tyr253 bears the Phosphotyrosine mark. Residues 253–279 (YKDSTSLDQSPTDIPGHEDDALSEWNE) form a disordered region. 2 positions are modified to phosphoserine: Ser262 and Ser275.

In terms of assembly, interacts with CYLC1; the interaction may be relevant for proper acrosome attachment to the nuclear envelope. N-glycosylated.

It is found in the cytoplasmic vesicle. The protein localises to the secretory vesicle. The protein resides in the acrosome inner membrane. In terms of biological role, plays a role in acrosome expansion and establishment of normal sperm morphology during spermatogenesis. Important for male fertility. The polypeptide is Sperm acrosome membrane-associated protein 1 (SPACA1) (Bos taurus (Bovine)).